The chain runs to 339 residues: MTDKIKEYIAEAKAFSTQNKEKLEEFRIKFLGSKGLVKDIFAEFKNVPNDQKKEFGQVINLLKTIAEEKVKTITEELESKEEIKSLYGDLSRPSEHIKIGSRHPISLIKNQIIDIFSNIGFNVSEGPEIEDDWHNFTALNLPEYHPARDMQDTFFIQTNPDILLRTHTSSVQVRYMENNKPPIRTISPGRVFRNEAVSSRSHCIFHQVEGLYIDKDVSFADMKQTLLYFTKEMFGKSKIRLRPSYFPFTEPSAEIDIYWGLKTETDYRITKGTGWLEIGGCGMVDPNVLKNCGIEPDQFNGFAFGMGIERIAMLIYQIGDIRMFYENDIRFLEQFKSTI.

Position 250 (E250) interacts with Mg(2+).

This sequence belongs to the class-II aminoacyl-tRNA synthetase family. Phe-tRNA synthetase alpha subunit type 1 subfamily. In terms of assembly, tetramer of two alpha and two beta subunits. Mg(2+) is required as a cofactor.

It localises to the cytoplasm. It catalyses the reaction tRNA(Phe) + L-phenylalanine + ATP = L-phenylalanyl-tRNA(Phe) + AMP + diphosphate + H(+). In Flavobacterium psychrophilum (strain ATCC 49511 / DSM 21280 / CIP 103535 / JIP02/86), this protein is Phenylalanine--tRNA ligase alpha subunit.